Consider the following 714-residue polypeptide: MFKIKKKKLFIPIIILVLTAFLALIGYISIIFLGHYVIDEKKLILHASSKIVDQNGDEVASLYTENREPVSINEIPKQVREAFIAVEDKRFYEHHGIDAKSVGRAVYRDILAGGKVEGGSTITQQLAKNIFLTHDKTFLRKTKEVIIAINLERDYSKDKLLEMYLNQLYFGHGVYGIQAASHYYFNKEVKDLTVSEGAVLAAIPKAPSTYSPILHPDKNKERRDTILGMMNDQGYISAKEAVTAQGRTLGLHVKKQSETPWFDSYIDLVIKEAEDKYSISGEQLLQGGYTIKVPLDSKLQKTAYQVMKEGSYYPGTDQNAEGSAVFINNKTGGVEAAIGGRDYTSKGYNRVTAVRQPGSTFKPLAVYGPAMQEKKFKPYSLLKDELQSYGDYTPKNYDSRYEGEVTMSDAITYSKNAPAVWTLNEIGVETGKSYLKANGIDIPDEGLALALGGLEKGVSPLQLAGAFHTFAANGTYTEPFFISSIIDEDGETIADHKEEGKRVFSKQTSWNMTRMLQQVVKKGTATSGTYHGDLAGKTGSTSYTGVSGATKDAWFAGYTPKITGAVWMGYDKTDQNHYLKAGSSYPTRLFKDILTQAGETGHVFTKPKNVKELESPIELKPVKTLTADYTFKAAGLFTIELKWDAQEDDRAVYRIYVNKDGEETLLDSVEGKGSYEIPYANLFSGASYKIVPYNTQTKREGEGTDYVQPKLFSS.

Residues 1-12 (MFKIKKKKLFIP) are Cytoplasmic-facing. Residues 13-33 (IIILVLTAFLALIGYISIIFL) form a helical; Signal-anchor for type II membrane protein membrane-spanning segment. Topologically, residues 34–714 (GHYVIDEKKL…DYVQPKLFSS (681 aa)) are extracellular. The transglycosylase stretch occupies residues 49 to 217 (SKIVDQNGDE…STYSPILHPD (169 aa)). Glutamate 87 functions as the Proton donor; for transglycosylase activity in the catalytic mechanism. A transpeptidase region spans residues 297-592 (SKLQKTAYQV…SSYPTRLFKD (296 aa)). Serine 359 (acyl-ester intermediate; for transpeptidase activity) is an active-site residue.

This sequence in the N-terminal section; belongs to the glycosyltransferase 51 family. The protein in the C-terminal section; belongs to the transpeptidase family.

The protein localises to the cell membrane. The catalysed reaction is [GlcNAc-(1-&gt;4)-Mur2Ac(oyl-L-Ala-gamma-D-Glu-L-Lys-D-Ala-D-Ala)](n)-di-trans,octa-cis-undecaprenyl diphosphate + beta-D-GlcNAc-(1-&gt;4)-Mur2Ac(oyl-L-Ala-gamma-D-Glu-L-Lys-D-Ala-D-Ala)-di-trans,octa-cis-undecaprenyl diphosphate = [GlcNAc-(1-&gt;4)-Mur2Ac(oyl-L-Ala-gamma-D-Glu-L-Lys-D-Ala-D-Ala)](n+1)-di-trans,octa-cis-undecaprenyl diphosphate + di-trans,octa-cis-undecaprenyl diphosphate + H(+). It catalyses the reaction Preferential cleavage: (Ac)2-L-Lys-D-Ala-|-D-Ala. Also transpeptidation of peptidyl-alanyl moieties that are N-acyl substituents of D-alanine.. It participates in cell wall biogenesis; peptidoglycan biosynthesis. Functionally, cell wall formation. May be involved in outgrowth of the germinated spore or it could function in the synthesis of the germ cell wall. This chain is Penicillin-binding protein 1F (pbpF), found in Bacillus subtilis (strain 168).